We begin with the raw amino-acid sequence, 168 residues long: Lipoprotein signal peptidase (168 aa).

3 consecutive transmembrane segments (helical) span residues 8–28 (TLLV…VVLL), 70–90 (KYFL…YLFF), and 104–124 (VLLC…GHIV). Active-site residues include aspartate 125 and aspartate 143. The helical transmembrane segment at 134 to 154 (WAFPTFNVADVLISLGTLLLV) threads the bilayer.

This sequence belongs to the peptidase A8 family.

Its subcellular location is the cell inner membrane. The enzyme catalyses Release of signal peptides from bacterial membrane prolipoproteins. Hydrolyzes -Xaa-Yaa-Zaa-|-(S,diacylglyceryl)Cys-, in which Xaa is hydrophobic (preferably Leu), and Yaa (Ala or Ser) and Zaa (Gly or Ala) have small, neutral side chains.. It participates in protein modification; lipoprotein biosynthesis (signal peptide cleavage). This protein specifically catalyzes the removal of signal peptides from prolipoproteins. The polypeptide is Lipoprotein signal peptidase (Chlamydia pneumoniae (Chlamydophila pneumoniae)).